Consider the following 93-residue polypeptide: Small ribosomal subunit protein uS19 (93 aa).

It belongs to the universal ribosomal protein uS19 family.

Its function is as follows. Protein S19 forms a complex with S13 that binds strongly to the 16S ribosomal RNA. The chain is Small ribosomal subunit protein uS19 from Campylobacter lari (strain RM2100 / D67 / ATCC BAA-1060).